Reading from the N-terminus, the 60-residue chain is Large ribosomal subunit protein bL32 (60 aa).

The protein belongs to the bacterial ribosomal protein bL32 family.

This is Large ribosomal subunit protein bL32 from Synechococcus sp. (strain JA-3-3Ab) (Cyanobacteria bacterium Yellowstone A-Prime).